The following is an 80-amino-acid chain: uncharacterized protein (80 aa).

Positions 1 to 15 (MEVIVVIVVIVVVIA) are cleaved as a signal peptide. Residues 23-44 (NSNSNSNNSSDSSNESNNSDSS) are compositionally biased toward low complexity. Residues 23 to 52 (NSNSNSNNSSDSSNESNNSDSSKNGGSDIY) form a disordered region. Residues asparagine 29, asparagine 30, asparagine 36, asparagine 39, and asparagine 64 are each glycosylated (N-linked (GlcNAc...) asparagine).

It localises to the secreted. This is an uncharacterized protein from Dictyostelium discoideum (Social amoeba).